Here is a 1073-residue protein sequence, read N- to C-terminus: Probable nuclear hormone receptor HR38 (1073 aa).

Disordered regions lie at residues 55–87 (NLNA…LPPP), 150–185 (TPAP…SNCD), 263–326 (TQTA…LVSP), 437–458 (ALHA…QQHQ), 492–514 (KYNS…APTP), 529–579 (PPLS…NSGG), and 618–640 (GQQQ…NGER). Low complexity-rich tracts occupy residues 59 to 82 (PTHQ…QQHP), 175 to 185 (DSNSDSNSNCD), and 263 to 277 (TQTA…ASAA). Basic residues predominate over residues 279 to 291 (HHQHHNHLLHQQH). 3 stretches are compositionally biased toward low complexity: residues 292–326 (HNQQ…LVSP), 441–458 (QQQQ…QQHQ), and 495–514 (SSSG…APTP). The segment covering 619-636 (QQQQQQQQSYQQHNYNSH) has biased composition (low complexity). The nuclear receptor DNA-binding region spans 741 to 816 (SQLCAVCGDT…VGMVKEVVRT (76 aa)). 2 consecutive NR C4-type zinc fingers follow at residues 744–764 (CAVC…CEGC) and 780–804 (CLAD…FQKC). Residues 819 to 841 (LKGRRGRLPSKPKSPQESPPSPP) are disordered. The region spanning 840–1070 (PPISLITALV…ALIENMFVTT (231 aa)) is the NR LBD domain.

Belongs to the nuclear hormone receptor family. NR4 subfamily. As to quaternary structure, forms a heterodimer with USP. As to expression, ubiquitously expressed in preblastoderm embryos, specifically in central nervous system and intestinal tract. Highly expressed in third instar larval imaginal disks and brain complexes, but not in ovaries.

The protein resides in the nucleus. Binds to NGFI-B response elements. Plays an important role in late stages of epidermal metamorphosis. The chain is Probable nuclear hormone receptor HR38 (Hr38) from Drosophila melanogaster (Fruit fly).